The chain runs to 219 residues: MIGWLRGERIEHWSQGGRQGLVIACAGVGYEVQLASRYLQPLSAGATCTVWIHQVQRDDGSSLFGFPDRRERDLFRVLISVNGIGPQVGLALLESCSAAELIEAIIDGDLRRLTQAQGVGKRTAERLAVELRDRLGAWSAEKNSDHSDLSLVDRSDLKSLPIEPDPLQDLQLTLSTLGYEDLEIRRAMRAVATGEEVPAANDGDGWLRASLRWLNRPSA.

A domain I region spans residues 1 to 67; the sequence is MIGWLRGERI…DDGSSLFGFP (67 aa). A domain II region spans residues 68-146; it reads DRRERDLFRV…AWSAEKNSDH (79 aa). Residues 147–161 are flexible linker; it reads SDLSLVDRSDLKSLP. The interval 162–219 is domain III; that stretch reads IEPDPLQDLQLTLSTLGYEDLEIRRAMRAVATGEEVPAANDGDGWLRASLRWLNRPSA.

This sequence belongs to the RuvA family. Homotetramer. Forms an RuvA(8)-RuvB(12)-Holliday junction (HJ) complex. HJ DNA is sandwiched between 2 RuvA tetramers; dsDNA enters through RuvA and exits via RuvB. An RuvB hexamer assembles on each DNA strand where it exits the tetramer. Each RuvB hexamer is contacted by two RuvA subunits (via domain III) on 2 adjacent RuvB subunits; this complex drives branch migration. In the full resolvosome a probable DNA-RuvA(4)-RuvB(12)-RuvC(2) complex forms which resolves the HJ.

It localises to the cytoplasm. Functionally, the RuvA-RuvB-RuvC complex processes Holliday junction (HJ) DNA during genetic recombination and DNA repair, while the RuvA-RuvB complex plays an important role in the rescue of blocked DNA replication forks via replication fork reversal (RFR). RuvA specifically binds to HJ cruciform DNA, conferring on it an open structure. The RuvB hexamer acts as an ATP-dependent pump, pulling dsDNA into and through the RuvAB complex. HJ branch migration allows RuvC to scan DNA until it finds its consensus sequence, where it cleaves and resolves the cruciform DNA. This Synechococcus sp. (strain CC9311) protein is Holliday junction branch migration complex subunit RuvA.